The sequence spans 745 residues: MAPSKVVIYAMRRELRLSDNPIFHHLSNPESKHGFSHLLPVYVFPAQQIDLSGFVPKGSENPHPAPKSAVGGYARCGPYRAKFLAESVWDLKTSLQSIGSDLLVRAGPYKDVIQSLVEGLKAKECQVGAVWMTSHEGSEEKSEEKTVASFCAKSGIDFKLWDDEKYLIHDRDTGITHLNDLPDVFTTYRKQIEPLREKARKTLPVPEKGALPAYPDIDMIPSQQPPFNIPGTCEELVDAVVRPVKNFLKDLPDFPEKAESSHPFRGGETSAHKRIDHLVLSGGMKSYKDSRNGLLGPDFSTKLSAYLAQGCVTARQIHHALVAYEDGTGTKYKGADGFGEGDNQGTETVRMELLWRDYMRLCHQKYGDKLFRVEGFNGKHTDYEGEDKKYGWRTANTSIALPGQEPTPEKVSEILARFNAGTTGMGLIDASQRELIHTGYTSNRTRQNVASFLAKHLEIDWRYGAEWYEMLLVDYDVSSNWANWQYVAGVGNDPRGAARIFNPVKQAFDYDKDGTYVRTWVPEVAKFENLENVFQAWTASKEDLKTAGLEGNIMVTDPVKPIKFNLDHKPSKVKKRPFFRKRGTKTRDAQGSAESPGSSDSHSGSGGSPDGSGGGNIPSESNCAAAGSGQAQQTHQGSGRSQSSSNHGGRSHSHQHNQQNYHHSHRGNDYTRGGGGGRGGRGGRGGGGGGYSASQGYYGIGGGYRGGGRGRGGGGGFRGRYAPTGGLGGHHHSEQQVASQFQTDA.

The transit peptide at 1–22 (MAPSKVVIYAMRRELRLSDNPI) directs the protein to the mitochondrion. The 144-residue stretch at 23–166 (FHHLSNPESK…DFKLWDDEKY (144 aa)) folds into the Photolyase/cryptochrome alpha/beta domain. 2 disordered regions span residues 563-688 (KFNL…GGGG) and 702-745 (GGYR…QTDA). Over residues 571-584 (SKVKKRPFFRKRGT) the composition is skewed to basic residues. Low complexity predominate over residues 591-603 (GSAESPGSSDSHS). The span at 604-616 (GSGGSPDGSGGGN) shows a compositional bias: gly residues. Low complexity predominate over residues 632-648 (QQTHQGSGRSQSSSNHG). Composition is skewed to gly residues over residues 672–688 (RGGG…GGGG) and 702–718 (GGYR…GGFR). Residues 735 to 745 (QQVASQFQTDA) show a composition bias toward polar residues.

Belongs to the DNA photolyase class-1 family. FAD serves as cofactor. (6R)-5,10-methylene-5,6,7,8-tetrahydrofolate is required as a cofactor.

The protein resides in the mitochondrion. May have a photoreceptor function. The protein is Putative cryptochrome DASH, mitochondrial (cry) of Neurospora crassa (strain ATCC 24698 / 74-OR23-1A / CBS 708.71 / DSM 1257 / FGSC 987).